Here is a 40-residue protein sequence, read N- to C-terminus: U2-myrmicitoxin-Tb1a (40 aa).

The N-terminal stretch at 1 to 3 (AEA) is a signal peptide. The propeptide occupies 4 to 29 (MAEAMADAMADAMADAMADAMAEAAA). Position 39 is an arginine amide (R39).

Belongs to the formicidae venom precursor-01 superfamily. As to expression, expressed by the venom gland.

The protein resides in the secreted. Its function is as follows. Venom protein with unknown function. Does not induce paralysis when a high dose is administered by intrathoracic injection into the blowfly Lucilia caesar. The sequence is that of U2-myrmicitoxin-Tb1a from Tetramorium bicarinatum (Tramp ant).